A 268-amino-acid chain; its full sequence is MDILQKIMQQKAQEVAIRRGQVSEAALLQRVKYAPPTQGFAHALLSRAQQGQNGVIAEVKRGSPSKGRIYPEHLAWQPAQIAESYRANGAACISCLTDETFFMGHDAFLQAIRAAVACPVLRKDFLYHSYQVVEARSLGADAILLIMAVLETPQAQELEAAARELGMDVLVEVHDERELEQAHELKTPLMGVNNRNLKTFVTDIETSFRLAARMEKGRLAISESGLNTPEDLARLNEAGIFSFLIGESLMRGGEPGGALAQLLGREVV.

The protein belongs to the TrpC family.

It carries out the reaction 1-(2-carboxyphenylamino)-1-deoxy-D-ribulose 5-phosphate + H(+) = (1S,2R)-1-C-(indol-3-yl)glycerol 3-phosphate + CO2 + H2O. It functions in the pathway amino-acid biosynthesis; L-tryptophan biosynthesis; L-tryptophan from chorismate: step 4/5. The polypeptide is Indole-3-glycerol phosphate synthase (Magnetococcus marinus (strain ATCC BAA-1437 / JCM 17883 / MC-1)).